The chain runs to 223 residues: 7-cyano-7-deazaguanine synthase (223 aa).

8–18 (LSGGLDSATTL) provides a ligand contact to ATP. 4 residues coordinate Zn(2+): Cys187, Cys197, Cys200, and Cys203.

It belongs to the QueC family. The cofactor is Zn(2+).

It carries out the reaction 7-carboxy-7-deazaguanine + NH4(+) + ATP = 7-cyano-7-deazaguanine + ADP + phosphate + H2O + H(+). It functions in the pathway purine metabolism; 7-cyano-7-deazaguanine biosynthesis. Its function is as follows. Catalyzes the ATP-dependent conversion of 7-carboxy-7-deazaguanine (CDG) to 7-cyano-7-deazaguanine (preQ(0)). The polypeptide is 7-cyano-7-deazaguanine synthase (Methylococcus capsulatus (strain ATCC 33009 / NCIMB 11132 / Bath)).